We begin with the raw amino-acid sequence, 319 residues long: Cytochrome c biogenesis protein CcsA (319 aa).

7 consecutive transmembrane segments (helical) span residues 9-29 (ILTH…LITL), 44-64 (GVIG…AYSG), 71-91 (LYES…FPYF), 143-163 (MVLG…LLVI), 225-245 (IISL…VWAN), 259-273 (TWAF…IYLH), and 286-306 (AIVA…VNLL).

It belongs to the CcmF/CycK/Ccl1/NrfE/CcsA family. As to quaternary structure, may interact with Ccs1.

It is found in the plastid. The protein localises to the chloroplast thylakoid membrane. In terms of biological role, required during biogenesis of c-type cytochromes (cytochrome c6 and cytochrome f) at the step of heme attachment. The sequence is that of Cytochrome c biogenesis protein CcsA from Oenothera glazioviana (Large-flowered evening primrose).